We begin with the raw amino-acid sequence, 437 residues long: MFILTMGLNHHTAPIDIREKLVFKETEEEMALITLLQEKSILENVIISTCNRTEIVAVVDQIHTGRYYLKRFMANWFQMDMEKIEPYLFFHEEKEAVNHLYKVTAGLDSLVLGETQILGQVKHAFEIAKQTGTTGTLLNKLFREVVTFAKKVHHQTKINENAVSVSYAAVEVAKKLYGSLENKKIVLVGAGEMSELALQNLAGSGIADITIINRTKANAEILADQFQAKVGTYEEMNNYLSIADIVLVSTSADEPIIKQKDMQILMSQKSTSMLVIDIGLPRNVEHDCSYIPNFHLYDIDDLAGVVSANSLERQKIVLALENTIETEVQNFFEWEKQLGVVPVIRALREKALEMQEITMTSLENKLPGLTEREYIQIGKHMKSIINQMLKQPISELKEMSVENDAPTSIEHFKRIFGLTELDITLSEKTQEQAETRS.

Residues 49 to 52 (TCNR), Ser109, 114 to 116 (ETQ), and Gln120 contribute to the substrate site. The Nucleophile role is filled by Cys50. Residue 189 to 194 (GAGEMS) participates in NADP(+) binding.

This sequence belongs to the glutamyl-tRNA reductase family. As to quaternary structure, homodimer.

The catalysed reaction is (S)-4-amino-5-oxopentanoate + tRNA(Glu) + NADP(+) = L-glutamyl-tRNA(Glu) + NADPH + H(+). Its pathway is porphyrin-containing compound metabolism; protoporphyrin-IX biosynthesis; 5-aminolevulinate from L-glutamyl-tRNA(Glu): step 1/2. In terms of biological role, catalyzes the NADPH-dependent reduction of glutamyl-tRNA(Glu) to glutamate 1-semialdehyde (GSA). The chain is Glutamyl-tRNA reductase from Listeria welshimeri serovar 6b (strain ATCC 35897 / DSM 20650 / CCUG 15529 / CIP 8149 / NCTC 11857 / SLCC 5334 / V8).